Reading from the N-terminus, the 154-residue chain is RxLR effector protein PexRD24 (154 aa).

A signal peptide spans 1 to 22 (MHSSLLWLGAVVALLAVNNVTA). The short motif at 53-67 (RSLRAVETSEDEEER) is the RxLR-dEER element. Lysine 138 is a short sequence motif (PP1c-binding motif).

It belongs to the RxLR effector family. In terms of assembly, interacts with the potato PP1c family proteins PP1c-1, PP1c-2 and PP1c-3.

It localises to the secreted. The protein resides in the host nucleus. It is found in the host nucleoplasm. Its subcellular location is the host nucleolus. Effector that interacts with isoforms of host protein phosphatase type 1c (PP1c), mimicking a regulatory subunit and causing their re-localization within the host nucleus. The holoenzymes formed with PP1c isoforms act to promote late blight by attenuating jasmonic acid (JA)- and salicylic acid (SA)-mediated transcriptional responses of the host plant. This chain is RxLR effector protein PexRD24, found in Phytophthora infestans (strain T30-4) (Potato late blight agent).